A 559-amino-acid polypeptide reads, in one-letter code: Dihydroxy-acid dehydratase (559 aa).

Residue Cys-49 coordinates [2Fe-2S] cluster. Asp-81 is a binding site for Mg(2+). Residue Cys-122 participates in [2Fe-2S] cluster binding. Mg(2+) is bound by residues Asp-123 and Lys-124. An N6-carboxylysine modification is found at Lys-124. A [2Fe-2S] cluster-binding site is contributed by Cys-194. Position 446 (Glu-446) interacts with Mg(2+). Ser-472 serves as the catalytic Proton acceptor.

The protein belongs to the IlvD/Edd family. Homodimer. [2Fe-2S] cluster serves as cofactor. Mg(2+) is required as a cofactor.

It carries out the reaction (2R)-2,3-dihydroxy-3-methylbutanoate = 3-methyl-2-oxobutanoate + H2O. The catalysed reaction is (2R,3R)-2,3-dihydroxy-3-methylpentanoate = (S)-3-methyl-2-oxopentanoate + H2O. It participates in amino-acid biosynthesis; L-isoleucine biosynthesis; L-isoleucine from 2-oxobutanoate: step 3/4. The protein operates within amino-acid biosynthesis; L-valine biosynthesis; L-valine from pyruvate: step 3/4. Its function is as follows. Functions in the biosynthesis of branched-chain amino acids. Catalyzes the dehydration of (2R,3R)-2,3-dihydroxy-3-methylpentanoate (2,3-dihydroxy-3-methylvalerate) into 2-oxo-3-methylpentanoate (2-oxo-3-methylvalerate) and of (2R)-2,3-dihydroxy-3-methylbutanoate (2,3-dihydroxyisovalerate) into 2-oxo-3-methylbutanoate (2-oxoisovalerate), the penultimate precursor to L-isoleucine and L-valine, respectively. The sequence is that of Dihydroxy-acid dehydratase from Prochlorococcus marinus (strain MIT 9515).